We begin with the raw amino-acid sequence, 473 residues long: ATP synthase subunit beta (473 aa).

Position 158–165 (Gly-158–Thr-165) interacts with ATP.

The protein belongs to the ATPase alpha/beta chains family. In terms of assembly, F-type ATPases have 2 components, CF(1) - the catalytic core - and CF(0) - the membrane proton channel. CF(1) has five subunits: alpha(3), beta(3), gamma(1), delta(1), epsilon(1). CF(0) has three main subunits: a(1), b(2) and c(9-12). The alpha and beta chains form an alternating ring which encloses part of the gamma chain. CF(1) is attached to CF(0) by a central stalk formed by the gamma and epsilon chains, while a peripheral stalk is formed by the delta and b chains.

Its subcellular location is the cell membrane. It carries out the reaction ATP + H2O + 4 H(+)(in) = ADP + phosphate + 5 H(+)(out). In terms of biological role, produces ATP from ADP in the presence of a proton gradient across the membrane. The catalytic sites are hosted primarily by the beta subunits. In Bacillus sp. (strain PS3), this protein is ATP synthase subunit beta.